We begin with the raw amino-acid sequence, 354 residues long: MLCGGSRASVHLWDHRHPPRLGAKVLRKSSFMLRPCSAISQQRIKSSFRSHCKTPRKIPAPLDCFSQGDDHPELSAEGLSPVAGGIVALGKFDALHIGHRELAIQAARIGTPYLLSFVGLAEVLGWKPRAPIVAKCDRKRVLSSWASYCGNIAPVEFEIEFASVRHLNPQQFVEKLSRELRVCGVVAGENYRFGYRASGDASELVRLCKDFGISAYIINSVMDKNQVSVNTEEEDSKSKERGQVSSTRVRHALAAGDVRYVTELLGRPHRVISRTRTQDLTSKRGRISLQTSSLLNLPPGNGVYKACSLIVGDKHPISCKVIVDTSNLYIETEEERFHNSDESQEFQLLGIEFG.

A chloroplast-targeting transit peptide spans 1–75 (MLCGGSRASV…SQGDDHPELS (75 aa)). Residues 228–248 (SVNTEEEDSKSKERGQVSSTR) form a disordered region.

The cofactor is Mg(2+).

It localises to the plastid. The protein resides in the chloroplast. The enzyme catalyses FMN + ATP + H(+) = FAD + diphosphate. The protein operates within cofactor biosynthesis; FAD biosynthesis; FAD from FMN: step 1/1. Functionally, catalyzes the adenylation of flavin mononucleotide (FMN) to form flavin adenine dinucleotide (FAD) coenzyme. The sequence is that of FAD synthetase 1, chloroplastic from Arabidopsis thaliana (Mouse-ear cress).